A 355-amino-acid chain; its full sequence is Protein DVR-1 (355 aa).

The first 15 residues, 1–15 (MFLVLLRACLLTLSL), serve as a signal peptide directing secretion. Positions 16 to 240 (CSPAEDDGLV…PLQCRSRRKR (225 aa)) are excised as a propeptide. N-linked (GlcNAc...) asparagine glycans are attached at residues N108, N179, and N296. 3 disulfide bridges follow: C254–C320, C283–C352, and C287–C354.

The protein belongs to the TGF-beta family. Homodimer. Abundant in ovaries and eggs, and equally distributed among all blastomeres.

It is found in the secreted. Serves to facilitate the differentiation of either mesoderm or endoderm either as a cofactor in an instructive signal or by providing permissive environment. This Danio rerio (Zebrafish) protein is Protein DVR-1 (dvr1).